The following is a 231-amino-acid chain: Ribosomal RNA small subunit methyltransferase G (231 aa).

Residues glycine 75, 125 to 126 (GE), and arginine 140 contribute to the S-adenosyl-L-methionine site. Residues 204-213 (AEAEEGDSPE) show a composition bias toward acidic residues. Residues 204-231 (AEAEEGDSPEAADASRGVILELTKKNKG) are disordered.

The protein belongs to the methyltransferase superfamily. RNA methyltransferase RsmG family.

The protein resides in the cytoplasm. Specifically methylates the N7 position of a guanine in 16S rRNA. This Rhodopirellula baltica (strain DSM 10527 / NCIMB 13988 / SH1) protein is Ribosomal RNA small subunit methyltransferase G.